Consider the following 326-residue polypeptide: Adenosine receptor A1 (326 aa).

The Extracellular segment spans residues 1-10 (MPHSVSAFQA). The helical transmembrane segment at 11–33 (AYIGIEVLIALVSVPGNVLVIWA) threads the bilayer. At 34-46 (VKVNQALRDATFC) the chain is on the cytoplasmic side. Residues 47-69 (FIASLAVADVAVGALVIPLAILI) traverse the membrane as a helical segment. Topologically, residues 70–80 (NIGPQTYFHTC) are extracellular. Cys80 and Cys169 are joined by a disulfide. Residues 81-102 (LMVACPVLILTQSSILALLAIA) form a helical membrane-spanning segment. The Cytoplasmic segment spans residues 103 to 123 (VDRYLRVKIPLRYKTVVTPRR). A helical transmembrane segment spans residues 124-146 (AAVAIAGCWILSLVVGLTPMFGW). Residues 147-176 (NNLSKIEMAWAANGSVGEPVIKCEFEKVIS) lie on the Extracellular side of the membrane. A glycan (N-linked (GlcNAc...) asparagine) is linked at Asn159. The helical transmembrane segment at 177–201 (MEYMVYFNFFVWVLPPLLLMVLIYL) threads the bilayer. Residues 202-235 (EVFYLIRKQLSKKVSASSGDPQKYYGKELKIAKS) are Cytoplasmic-facing. A helical membrane pass occupies residues 236 to 259 (LALILFLFALSWLPLHILNCITLF). The Extracellular segment spans residues 260-267 (CPTCHKPT). A helical transmembrane segment spans residues 268-292 (ILTYIAIFLTHGNSAMNPIVYAFRI). Residues 293–326 (QKFRVTFLKIWNDHFRCQPEPPIDEDLPEEKVDD) lie on the Cytoplasmic side of the membrane. The S-palmitoyl cysteine moiety is linked to residue Cys309.

This sequence belongs to the G-protein coupled receptor 1 family.

Its subcellular location is the cell membrane. Receptor for adenosine. The activity of this receptor is mediated by G proteins which inhibit adenylyl cyclase. The polypeptide is Adenosine receptor A1 (ADORA1) (Cavia porcellus (Guinea pig)).